The following is a 749-amino-acid chain: EF-hand domain-containing family member C2 (749 aa).

DM10 domains follow at residues 75-182 (DKQV…RKIG), 226-368 (HGKI…KSKY), and 431-538 (KSNI…EQNT). Residues 558-593 (GKSRELKQVFKAADSKHTNMVDYNTFRDILMSLTVG) form the EF-hand domain.

Microtubule inner protein component of sperm flagellar doublet microtubules. Expressed in airway epithelial cells.

The protein localises to the cytoplasm. The protein resides in the cytoskeleton. It is found in the cilium axoneme. It localises to the flagellum axoneme. Functionally, microtubule inner protein (MIP) part of the dynein-decorated doublet microtubules (DMTs) in cilia axoneme, which is required for motile cilia beating. The polypeptide is EF-hand domain-containing family member C2 (Homo sapiens (Human)).